Reading from the N-terminus, the 154-residue chain is dCTP deaminase (154 aa).

Residues 79-84, Asp95, Gln124, and Tyr138 each bind dCTP; that span reads RSSLAR.

The protein belongs to the dCTP deaminase family. As to quaternary structure, homotrimer.

It catalyses the reaction dCTP + H2O + H(+) = dUTP + NH4(+). It participates in pyrimidine metabolism; dUMP biosynthesis; dUMP from dCTP (dUTP route): step 1/2. Its function is as follows. Catalyzes the deamination of dCTP to dUTP. This chain is dCTP deaminase, found in Pyrococcus abyssi (strain GE5 / Orsay).